We begin with the raw amino-acid sequence, 280 residues long: uncharacterized protein (280 aa).

The first 21 residues, methionine 1–alanine 21, serve as a signal peptide directing secretion.

The protein to M.leprae ML2432 and S.coelicolor SCO3347.

This is an uncharacterized protein from Mycobacterium tuberculosis (strain CDC 1551 / Oshkosh).